We begin with the raw amino-acid sequence, 359 residues long: MKKYLALALIAPLLISCSTTKKGGTYNEAWVKDTNGFDILMGQFAHNIENIWGFKEVVIAGPKDYVKYTDQYQTRSHINFDDGTITIETIAGTEPAAHLRRAIIKTLLMGDDPSSVDLYSDVDDITISKEPFLYGQVVDNTGQPIRWEGRASNFADYLLKNRLKSRSNGLRIIYSVTINMVPNHLDKRAHKYLGMVRQASRKYGVDESLILAIMQTESSFNPYAVSRSDALGLMQVVQHTAGKDVFRSQGKSGTPSRSFLFDPASNIDTGTAYLAMLNNVYLGGIDNPTSRRYAVITAYNGGAGSVLRVFSNDKIQAANIINTMTPGDVYQTLTTRHPSAESRRYLYKVNTAQKSYRRR.

An N-terminal signal peptide occupies residues M1 to S16. C17 is lipidated: N-palmitoyl cysteine. The S-diacylglycerol cysteine moiety is linked to residue C17.

This sequence belongs to the transglycosylase Slt family.

It localises to the cell outer membrane. It carries out the reaction Exolytic cleavage of the (1-&gt;4)-beta-glycosidic linkage between N-acetylmuramic acid (MurNAc) and N-acetylglucosamine (GlcNAc) residues in peptidoglycan, from either the reducing or the non-reducing ends of the peptidoglycan chains, with concomitant formation of a 1,6-anhydrobond in the MurNAc residue.. Murein-degrading enzyme. May play a role in recycling of muropeptides during cell elongation and/or cell division. The polypeptide is Membrane-bound lytic murein transglycosylase C (Escherichia coli O157:H7).